The chain runs to 304 residues: Putative F-box/LRR-repeat protein 21 (304 aa).

Residues 43-90 enclose the F-box domain; sequence RRNWVDLPPELTTSILLRLSLTDILDNAQKVCKEWRRICKDPSMWRKI. LRR repeat units lie at residues 132 to 159, 173 to 198, 218 to 241, and 243 to 268; these read LSYI…GVVN, THSC…KLNS, GPLE…HLQL, and ANRL…DVRK.

In Arabidopsis thaliana (Mouse-ear cress), this protein is Putative F-box/LRR-repeat protein 21 (FBL21).